We begin with the raw amino-acid sequence, 260 residues long: DNA repair protein RecO (260 aa).

It belongs to the RecO family.

Its function is as follows. Involved in DNA repair and RecF pathway recombination. The protein is DNA repair protein RecO of Paracidovorax citrulli (strain AAC00-1) (Acidovorax citrulli).